Here is a 289-residue protein sequence, read N- to C-terminus: Oxaloacetate decarboxylase 1 (289 aa).

A substrate-binding site is contributed by serine 50. Aspartate 88 is a binding site for Mg(2+). Residues arginine 159 and histidine 235 each contribute to the substrate site.

The protein belongs to the isocitrate lyase/PEP mutase superfamily. Oxaloacetate decarboxylase family. As to quaternary structure, homotetramer; dimer of dimers. It depends on Mg(2+) as a cofactor.

The catalysed reaction is oxaloacetate + H(+) = pyruvate + CO2. Catalyzes the decarboxylation of oxaloacetate into pyruvate. Seems to play a role in maintaining cellular concentrations of bicarbonate and pyruvate. The chain is Oxaloacetate decarboxylase 1 from Pseudomonas putida (strain W619).